A 456-amino-acid polypeptide reads, in one-letter code: Argininosuccinate lyase (456 aa).

It belongs to the lyase 1 family. Argininosuccinate lyase subfamily.

The protein resides in the cytoplasm. It catalyses the reaction 2-(N(omega)-L-arginino)succinate = fumarate + L-arginine. It functions in the pathway amino-acid biosynthesis; L-arginine biosynthesis; L-arginine from L-ornithine and carbamoyl phosphate: step 3/3. In Listeria monocytogenes serotype 4b (strain CLIP80459), this protein is Argininosuccinate lyase.